A 487-amino-acid chain; its full sequence is GTPase Der (487 aa).

The EngA-type G 1 domain occupies 2-166 (LKIAILGRPN…RIKLVANLPE (165 aa)). GTP contacts are provided by residues 8 to 15 (GRPNVGKS), 55 to 59 (DTGGV), and 118 to 121 (NKAD). The tract at residues 165 to 194 (PEPREEEEEGLEELSVDEHEESEAALPSNT) is disordered. Residues 168–187 (REEEEEGLEELSVDEHEESE) show a composition bias toward acidic residues. One can recognise an EngA-type G 2 domain in the interval 225–398 (LKIALIGRPN…AIDELHHVVS (174 aa)). Residues 231-238 (GRPNVGKS), 278-282 (DTAGL), and 343-346 (NKWD) each bind GTP. A KH-like domain is found at 399–483 (NKVPTPIVNK…PFDLEFKEKP (85 aa)).

Belongs to the TRAFAC class TrmE-Era-EngA-EngB-Septin-like GTPase superfamily. EngA (Der) GTPase family. Associates with the 50S ribosomal subunit.

Functionally, GTPase that plays an essential role in the late steps of ribosome biogenesis. This is GTPase Der from Chlamydia pneumoniae (Chlamydophila pneumoniae).